The following is a 3625-amino-acid chain: Cubilin (3625 aa).

Residues 1-20 (MVNNMSLLFLWSLVIFLTFA) form the signal peptide. A propeptide spans 21–36 (ESYGEAGGPELQRHKR) (removed in mature form). The tract at residues 43-50 (PRMAAERG) is interaction with AMN. A glycan (N-linked (GlcNAc...) asparagine) is linked at Asn106. The EGF-like 1 domain maps to 133 to 169 (DGKVCSSNPCQNGATCLNLHDSFFCICPSQWKGPLCS). 6 disulfide bridges follow: Cys137-Cys148, Cys142-Cys157, Cys159-Cys168, Cys175-Cys191, Cys185-Cys200, and Cys202-Cys211. The EGF-like 2; calcium-binding domain maps to 171–212 (DVNECEIYSGTPLGCQNGATCINTPGSYSCLCSPETHGPQCA). N-linked (GlcNAc...) asparagine glycosylation occurs at Asn257. Residues 264 to 305 (DRDECSSWPAPCSALVPCFNTLGSFYCGACPTGWQGNGYICE) enclose the EGF-like 3; calcium-binding domain. Disulfide bonds link Cys268–Cys281, Cys275–Cys290, Cys293–Cys304, Cys310–Cys325, Cys317–Cys334, Cys337–Cys348, Cys354–Cys367, Cys361–Cys377, Cys379–Cys393, Cys400–Cys410, Cys405–Cys419, Cys421–Cys430, Cys437–Cys448, Cys442–Cys457, Cys459–Cys468, Cys475–Cys501, Cys528–Cys550, Cys591–Cys617, Cys644–Cys666, and Cys709–Cys734. The EGF-like 4; calcium-binding domain maps to 306–349 (DINECEINNGGCSVAPPVECVNTPGSYYCPSCPPGYQGDGRMCT). EGF-like domains are found at residues 350–394 (LIDL…HGCV) and 396–431 (LSNVCLTRPCLHGQCMETASGYVCNCDSGWAGMNCT). Asn429 carries an N-linked (GlcNAc...) asparagine glycan. Residues 433 to 469 (NINECLSNPCLNGGTCVDGINAFSCECTRFWTGSLCH) form the EGF-like 7; calcium-binding domain. CUB domains are found at residues 475–587 (CGGT…WETR), 591–703 (CGGV…YLTT), 709–816 (CGGN…YQVA), 817–928 (CGGE…FSTE), 932–1042 (CGEI…YEAT), 1045–1163 (SAGN…WDGS), 1167–1279 (CGGN…YQQT), 1280–1391 (CDNV…WLVH), 1393–1508 (CGGE…WRAV), 1512–1621 (CGGI…FRQA), 1622–1736 (CGGH…YVAS), 1740–1852 (CGGI…FNNI), 1854–1965 (GNDH…WFAM), 1980–2093 (CGGF…FHKS), 2094–2215 (CGGY…YEAK), 2219–2336 (CGGN…YSIA), 2338–2450 (CGGT…FDSS), 2454–2567 (CGGD…YTSS), 2572–2689 (CGGS…YSFT), 2691–2803 (CGGI…WNTE), 2807–2921 (CGGI…FLSR), 2922–3037 (CGRN…YRIT), 3039–3152 (CGGT…FRET), 3159–3276 (CGGY…YTLL), 3280–3397 (CGGT…IAGC), 3397–3509 (CSRE…WTSS), and 3513–3625 (CGGT…TWAS). N-linked (GlcNAc...) asparagine glycosylation is found at Asn712 and Asn749. Cys761 and Cys779 are joined by a disulfide. N-linked (GlcNAc...) asparagine glycosylation occurs at Asn781. A disulfide bridge links Cys817 with Cys842. Asn857 carries an N-linked (GlcNAc...) asparagine glycan. 2 disulfides stabilise this stretch: Cys869/Cys891 and Cys932/Cys958. Residue Asn957 is glycosylated (N-linked (GlcNAc...) asparagine). A Ca(2+)-binding site is contributed by Glu980. A glycan (N-linked (GlcNAc...) asparagine) is linked at Asn984. The cysteines at positions 985 and 1005 are disulfide-linked. Ca(2+) contacts are provided by Asp988, Asp1027, Asp1029, and Leu1030. Asn1048 carries N-linked (GlcNAc...) asparagine glycosylation. Ca(2+) contacts are provided by Glu1097, Asp1107, and Asp1148. Cys1104 and Cys1126 form a disulfide bridge. Cys1167 and Cys1193 are joined by a disulfide. The N-linked (GlcNAc...) asparagine glycan is linked to Asn1170. Glu1215 serves as a coordination point for Ca(2+). Asn1219 carries N-linked (GlcNAc...) asparagine glycosylation. Residues Cys1220 and Cys1242 are joined by a disulfide bond. Residues Asp1223, Asp1264, Gly1266, and Gln1267 each contribute to the Ca(2+) site. An intrachain disulfide couples Cys1280 to Cys1308. 3 N-linked (GlcNAc...) asparagine glycosylation sites follow: Asn1287, Asn1309, and Asn1321. Position 1330 (Glu1330) interacts with Ca(2+). A glycan (N-linked (GlcNAc...) asparagine) is linked at Asn1334. Cysteines 1335 and 1353 form a disulfide. Asp1338, Asp1375, and Val1377 together coordinate Ca(2+). Cystine bridges form between Cys1393-Cys1419 and Cys1446-Cys1468. Residue Asn1502 is glycosylated (N-linked (GlcNAc...) asparagine). Cys1512 and Cys1538 are oxidised to a cystine. An N-linked (GlcNAc...) asparagine glycan is attached at Asn1553. 5 disulfide bridges follow: Cys1565/Cys1583, Cys1622/Cys1649, Cys1677/Cys1699, Cys1740/Cys1766, and Cys1793/Cys1814. An N-linked (GlcNAc...) asparagine glycan is attached at Asn1648. Asn1804, Asn1821, and Asn1887 each carry an N-linked (GlcNAc...) asparagine glycan. Intrachain disulfides connect Cys1907–Cys1929, Cys1980–Cys2008, and Cys2034–Cys2056. Asn2087 and Asn2119 each carry an N-linked (GlcNAc...) asparagine glycan. 2 disulfide bridges follow: Cys2094/Cys2120 and Cys2219/Cys2249. Asn2276 carries an N-linked (GlcNAc...) asparagine glycan. 2 disulfide bridges follow: Cys2277-Cys2299 and Cys2338-Cys2365. N-linked (GlcNAc...) asparagine glycosylation is found at Asn2388 and Asn2402. Intrachain disulfides connect Cys2392-Cys2413, Cys2454-Cys2480, and Cys2507-Cys2529. 4 N-linked (GlcNAc...) asparagine glycosylation sites follow: Asn2533, Asn2583, Asn2594, and Asn2612. Cysteines 2572 and 2601 form a disulfide. 5 cysteine pairs are disulfide-bonded: Cys2630–Cys2651, Cys2691–Cys2717, Cys2744–Cys2766, Cys2807–Cys2833, and Cys2862–Cys2885. Residues Asn2887, Asn2925, Asn2928, and Asn2947 are each glycosylated (N-linked (GlcNAc...) asparagine). 2 cysteine pairs are disulfide-bonded: Cys2922–Cys2948 and Cys2979–Cys3001. A Phosphothreonine modification is found at Thr3010. Disulfide bonds link Cys3039–Cys3066 and Cys3093–Cys3115. N-linked (GlcNAc...) asparagine glycosylation is found at Asn3044, Asn3105, and Asn3127. 2 disulfide bridges follow: Cys3159/Cys3187 and Cys3217/Cys3239. N-linked (GlcNAc...) asparagine glycans are attached at residues Asn3270 and Asn3285. 2 disulfides stabilise this stretch: Cys3280/Cys3308 and Cys3334/Cys3356. Asn3359 is a glycosylation site (N-linked (GlcNAc...) asparagine). Residues Cys3397 and Cys3423 are joined by a disulfide bond. 3 N-linked (GlcNAc...) asparagine glycosylation sites follow: Asn3432, Asn3459, and Asn3535. 3 cysteine pairs are disulfide-bonded: Cys3450–Cys3472, Cys3513–Cys3539, and Cys3566–Cys3588.

In terms of assembly, interacts with AMN. Component of the cubam complex composed of one CUBN trimer and one AMN chain. The cubam complex can dimerize. Interacts with LRP2 in a dual-receptor complex in a calcium-dependent manner. Found in a complex with PID1/PCLI1, LRP1 and CUBNI. Interacts with LRP1 and PID1/PCLI1. Post-translationally, the precursor is cleaved by a trans-Golgi proteinase furin, removing a propeptide. N-glycosylated. As to expression, detected in kidney cortex (at protein level).

The protein localises to the apical cell membrane. It is found in the cell membrane. The protein resides in the membrane. It localises to the coated pit. Its subcellular location is the endosome. The protein localises to the lysosome membrane. Its function is as follows. Endocytic receptor which plays a role in lipoprotein, vitamin and iron metabolism by facilitating their uptake. Acts together with LRP2 to mediate endocytosis of high-density lipoproteins, GC, hemoglobin, ALB, TF and SCGB1A1. Acts together with AMN to mediate endocytosis of the CBLIF-cobalamin complex. Binds to ALB, MB, Kappa and lambda-light chains, TF, hemoglobin, GC, SCGB1A1, APOA1, high density lipoprotein, and the CBLIF-cobalamin complex. Ligand binding requires calcium. Serves as important transporter in several absorptive epithelia, including intestine, renal proximal tubules and embryonic yolk sac. May play an important role in the development of the peri-implantation embryo through internalization of APOA1 and cholesterol. Binds to LGALS3 at the maternal-fetal interface. The chain is Cubilin (CUBN) from Sus scrofa (Pig).